The sequence spans 183 residues: Hypoxanthine/guanine phosphoribosyltransferase (183 aa).

This sequence belongs to the purine/pyrimidine phosphoribosyltransferase family. Archaeal HPRT subfamily. As to quaternary structure, homodimer.

It localises to the cytoplasm. The enzyme catalyses IMP + diphosphate = hypoxanthine + 5-phospho-alpha-D-ribose 1-diphosphate. It carries out the reaction GMP + diphosphate = guanine + 5-phospho-alpha-D-ribose 1-diphosphate. It functions in the pathway purine metabolism; IMP biosynthesis via salvage pathway; IMP from hypoxanthine: step 1/1. Its function is as follows. Catalyzes a salvage reaction resulting in the formation of IMP that is energically less costly than de novo synthesis. The polypeptide is Hypoxanthine/guanine phosphoribosyltransferase (Methanotorris igneus (strain DSM 5666 / JCM 11834 / Kol 5)).